The following is a 471-amino-acid chain: ATP synthase subunit beta 2 (471 aa).

157-164 serves as a coordination point for ATP; sequence GGAGVGKT.

This sequence belongs to the ATPase alpha/beta chains family. In terms of assembly, F-type ATPases have 2 components, CF(1) - the catalytic core - and CF(0) - the membrane proton channel. CF(1) has five subunits: alpha(3), beta(3), gamma(1), delta(1), epsilon(1). CF(0) has three main subunits: a(1), b(2) and c(9-12). The alpha and beta chains form an alternating ring which encloses part of the gamma chain. CF(1) is attached to CF(0) by a central stalk formed by the gamma and epsilon chains, while a peripheral stalk is formed by the delta and b chains.

Its subcellular location is the cell inner membrane. The catalysed reaction is ATP + H2O + 4 H(+)(in) = ADP + phosphate + 5 H(+)(out). In terms of biological role, produces ATP from ADP in the presence of a proton gradient across the membrane. The catalytic sites are hosted primarily by the beta subunits. The sequence is that of ATP synthase subunit beta 2 from Pelobacter propionicus (strain DSM 2379 / NBRC 103807 / OttBd1).